Consider the following 180-residue polypeptide: tRNA-splicing endonuclease (180 aa).

Catalysis depends on residues Tyr-117, His-125, and Lys-156.

The protein belongs to the tRNA-intron endonuclease family. Archaeal short subfamily. In terms of assembly, homotetramer; although the tetramer contains four active sites, only two participate in the cleavage. Therefore, it should be considered as a dimer of dimers.

It catalyses the reaction pretRNA = a 3'-half-tRNA molecule with a 5'-OH end + a 5'-half-tRNA molecule with a 2',3'-cyclic phosphate end + an intron with a 2',3'-cyclic phosphate and a 5'-hydroxyl terminus.. Functionally, endonuclease that removes tRNA introns. Cleaves pre-tRNA at the 5'- and 3'-splice sites to release the intron. The products are an intron and two tRNA half-molecules bearing 2',3' cyclic phosphate and 5'-OH termini. Recognizes a pseudosymmetric substrate in which 2 bulged loops of 3 bases are separated by a stem of 4 bp. This Sulfurisphaera tokodaii (strain DSM 16993 / JCM 10545 / NBRC 100140 / 7) (Sulfolobus tokodaii) protein is tRNA-splicing endonuclease.